The chain runs to 435 residues: uncharacterized protein (435 aa).

S-adenosyl-L-methionine contacts are provided by Gln-261, Tyr-294, Glu-318, and Asp-366. Residue Cys-393 is the Nucleophile of the active site.

This sequence belongs to the class I-like SAM-binding methyltransferase superfamily. RNA M5U methyltransferase family.

This is an uncharacterized protein from Bifidobacterium longum (strain NCC 2705).